A 510-amino-acid polypeptide reads, in one-letter code: NAD(P)H-quinone oxidoreductase subunit 2 A, chloroplastic (510 aa).

13 helical membrane passes run 26-46, 57-77, 99-119, 124-144, 149-169, 183-203, 227-247, 295-315, 323-342, 354-374, 395-415, 418-438, and 484-504; these read LFDG…ILLL, IPWF…ALLF, IFQF…VEYI, MAIT…MFLC, LITI…LSGY, YLLM…WLYG, PGIS…LSPA, WHPL…LIAI, MLAY…IIVG, YMLF…LFGL, ALSL…AGFF, LHLF…IGLF, and MIVC…IIAI.

It belongs to the complex I subunit 2 family. As to quaternary structure, NDH is composed of at least 16 different subunits, 5 of which are encoded in the nucleus.

The protein resides in the plastid. The protein localises to the chloroplast thylakoid membrane. The catalysed reaction is a plastoquinone + NADH + (n+1) H(+)(in) = a plastoquinol + NAD(+) + n H(+)(out). It catalyses the reaction a plastoquinone + NADPH + (n+1) H(+)(in) = a plastoquinol + NADP(+) + n H(+)(out). Functionally, NDH shuttles electrons from NAD(P)H:plastoquinone, via FMN and iron-sulfur (Fe-S) centers, to quinones in the photosynthetic chain and possibly in a chloroplast respiratory chain. The immediate electron acceptor for the enzyme in this species is believed to be plastoquinone. Couples the redox reaction to proton translocation, and thus conserves the redox energy in a proton gradient. The protein is NAD(P)H-quinone oxidoreductase subunit 2 A, chloroplastic of Oenothera biennis (German evening primrose).